The primary structure comprises 75 residues: Putative membrane protein insertion efficiency factor 2 (75 aa).

Belongs to the UPF0161 family.

It is found in the cell membrane. Functionally, could be involved in insertion of integral membrane proteins into the membrane. The sequence is that of Putative membrane protein insertion efficiency factor 2 from Bacillus licheniformis (strain ATCC 14580 / DSM 13 / JCM 2505 / CCUG 7422 / NBRC 12200 / NCIMB 9375 / NCTC 10341 / NRRL NRS-1264 / Gibson 46).